The following is a 180-amino-acid chain: NADH-quinone oxidoreductase subunit I (180 aa).

4Fe-4S ferredoxin-type domains follow at residues 50-80 (LTRN…LQKS) and 90-119 (KFFR…LMPD). [4Fe-4S] cluster is bound by residues C60, C63, C66, C70, C99, C102, C105, and C109.

Belongs to the complex I 23 kDa subunit family. NDH-1 is composed of 13 different subunits. Subunits NuoA, H, J, K, L, M, N constitute the membrane sector of the complex. [4Fe-4S] cluster serves as cofactor.

The protein localises to the cell membrane. It carries out the reaction a quinone + NADH + 5 H(+)(in) = a quinol + NAD(+) + 4 H(+)(out). Functionally, NDH-1 shuttles electrons from NADH, via FMN and iron-sulfur (Fe-S) centers, to quinones in the respiratory chain. The immediate electron acceptor for the enzyme in this species is believed to be ubiquinone. Couples the redox reaction to proton translocation (for every two electrons transferred, four hydrogen ions are translocated across the cytoplasmic membrane), and thus conserves the redox energy in a proton gradient. The sequence is that of NADH-quinone oxidoreductase subunit I from Buchnera aphidicola subsp. Schizaphis graminum (strain Sg).